The following is a 206-amino-acid chain: Peroxynitrite isomerase (206 aa).

The short motif at 21 to 27 (GTWEGNG) is the GXWXGXG element. Histidine 190 lines the heme b pocket.

It belongs to the nitrobindin family. In terms of assembly, homodimer. The cofactor is heme b.

It catalyses the reaction peroxynitrite = nitrate. Its pathway is nitrogen metabolism. Heme-binding protein able to scavenge peroxynitrite and to protect free L-tyrosine against peroxynitrite-mediated nitration, by acting as a peroxynitrite isomerase that converts peroxynitrite to nitrate. Therefore, this protein likely plays a role in peroxynitrite sensing and in the detoxification of reactive nitrogen and oxygen species (RNS and ROS, respectively). Is able to bind nitric oxide (NO) in vitro, but may act as a sensor of peroxynitrite levels in vivo. This Kocuria rhizophila (strain ATCC 9341 / DSM 348 / NBRC 103217 / DC2201) protein is Peroxynitrite isomerase.